The sequence spans 104 residues: Small ribosomal subunit protein bS18c (104 aa).

This sequence belongs to the bacterial ribosomal protein bS18 family. As to quaternary structure, part of the 30S ribosomal subunit.

The protein localises to the plastid. It is found in the chloroplast. This is Small ribosomal subunit protein bS18c from Lotus japonicus (Lotus corniculatus var. japonicus).